Reading from the N-terminus, the 100-residue chain is Large ribosomal subunit protein uL23 (100 aa).

It belongs to the universal ribosomal protein uL23 family. Part of the 50S ribosomal subunit. Contacts protein L29, and trigger factor when it is bound to the ribosome.

One of the early assembly proteins it binds 23S rRNA. One of the proteins that surrounds the polypeptide exit tunnel on the outside of the ribosome. Forms the main docking site for trigger factor binding to the ribosome. The chain is Large ribosomal subunit protein uL23 from Shewanella sp. (strain MR-4).